Reading from the N-terminus, the 604-residue chain is Solute carrier family 23 member 1 (604 aa).

The tract at residues 1–29 is disordered; sequence MKAQEDPGSSKQHECPDSAGTSTRDQQAP. The Cytoplasmic portion of the chain corresponds to 1–59; that stretch reads MKAQEDPGSSKQHECPDSAGTSTRDQQAPLPAEPKFDMLYKIEDVPPWYLCILLGFQHY. Residues 60–80 traverse the membrane as a helical segment; that stretch reads LTCFSGTIAVPFLLAEALCVG. Residues 81-88 are Extracellular-facing; sequence RDQHMISQ. A helical transmembrane segment spans residues 89–109; it reads LIGTIFTCVGITTLIQTTVGI. A topological domain (cytoplasmic) is located at residue arginine 110. A helical transmembrane segment spans residues 111–131; that stretch reads LPLFQASAFAFLVPAKAILAL. The Extracellular segment spans residues 132-166; sequence ERWKCPPEEEIYGNWSMPLNTSHIWHPRIREVQGA. Residues asparagine 145 and asparagine 151 are each glycosylated (N-linked (GlcNAc...) asparagine). The chain crosses the membrane as a helical span at residues 167–187; it reads IMVSSVVEVVIGLLGLPGALL. At 188–214 the chain is on the cytoplasmic side; that stretch reads SYIGPLTVTPTVSLIGLSVFQAAGDRA. Residues 215 to 232 form a helical membrane-spanning segment; the sequence is GSHWGISACSILLIVLFS. The Extracellular segment spans residues 233–236; sequence QYLR. The helical intramembrane region spans 237–250; sequence NLTFLLPVYRWGKG. The Extracellular portion of the chain corresponds to 251–257; that stretch reads LTLFRIQ. The chain crosses the membrane as a helical span at residues 258–278; the sequence is IFKMFPIVLAIMTVWLLCYVL. Residues 279–319 lie on the Cytoplasmic side of the membrane; the sequence is TLTDVLPADPTVYGFQARTDARGDIMAISPWIRIPYPCQWG. The chain crosses the membrane as a helical span at residues 320 to 340; the sequence is LPTVTVAAVLGMFSATLAGII. Topologically, residues 341–365 are extracellular; the sequence is ESIGDYYACARLAGAPPPPVHAINR. A helical transmembrane segment spans residues 366-386; the sequence is GIFTEGVCCIIAGLLGTGNGS. The Cytoplasmic portion of the chain corresponds to 387-409; that stretch reads TSSSPNIGVLGITKVGSRRVVQY. A helical membrane pass occupies residues 410-430; sequence GAGIMLILGAIGKFTALFASL. The Extracellular portion of the chain corresponds to 431–433; sequence PDP. The chain crosses the membrane as a helical span at residues 434-454; sequence ILGGMFCTLFGMITAVGLSNL. Over 455–464 the chain is Cytoplasmic; the sequence is QFVDMNSSRN. A helical membrane pass occupies residues 465 to 485; it reads LFVLGFSMFFGLTLPNYLDSN. Residues 486 to 497 lie on the Extracellular side of the membrane; that stretch reads PGAINTGVPEVD. Residues 498–518 traverse the membrane as a helical segment; that stretch reads QILTVLLTTEMFVGGCLAFIL. The Cytoplasmic portion of the chain corresponds to 519–604; sequence DNTVPGSPEE…TETGSVCTKV (86 aa). Threonine 597 is modified (phosphothreonine). Serine 599 carries the post-translational modification Phosphoserine. A Phosphothreonine modification is found at threonine 602.

It belongs to the nucleobase:cation symporter-2 (NCS2) (TC 2.A.40) family. Phosphorylated. In terms of tissue distribution, highly expressed in the straight segment of proximal tubules in the kidney, in intestine and liver. Detected in epithelial cells of the bronchiole and epididymis.

The protein localises to the cell membrane. The catalysed reaction is L-ascorbate(out) + 2 Na(+)(out) = L-ascorbate(in) + 2 Na(+)(in). It carries out the reaction urate(out) + 2 Na(+)(out) = urate(in) + 2 Na(+)(in). Functionally, sodium/ascorbate cotransporter. Mediates electrogenic uptake of vitamin C, with a stoichiometry of 2 Na(+) for each ascorbate. Has retained some ancestral activity toward nucleobases such as urate, an oxidized purine. Low-affinity high-capacity sodium:urate cotransporter, may regulate serum urate levels by serving as a renal urate re-absorber. The protein is Solute carrier family 23 member 1 (Slc23a1) of Rattus norvegicus (Rat).